The chain runs to 580 residues: 2-succinyl-5-enolpyruvyl-6-hydroxy-3-cyclohexene-1-carboxylate synthase (580 aa).

This sequence belongs to the TPP enzyme family. MenD subfamily. In terms of assembly, homodimer. Requires Mg(2+) as cofactor. Mn(2+) is required as a cofactor. Thiamine diphosphate serves as cofactor.

It carries out the reaction isochorismate + 2-oxoglutarate + H(+) = 5-enolpyruvoyl-6-hydroxy-2-succinyl-cyclohex-3-ene-1-carboxylate + CO2. The protein operates within quinol/quinone metabolism; 1,4-dihydroxy-2-naphthoate biosynthesis; 1,4-dihydroxy-2-naphthoate from chorismate: step 2/7. Its pathway is quinol/quinone metabolism; menaquinone biosynthesis. Its function is as follows. Catalyzes the thiamine diphosphate-dependent decarboxylation of 2-oxoglutarate and the subsequent addition of the resulting succinic semialdehyde-thiamine pyrophosphate anion to isochorismate to yield 2-succinyl-5-enolpyruvyl-6-hydroxy-3-cyclohexene-1-carboxylate (SEPHCHC). This chain is 2-succinyl-5-enolpyruvyl-6-hydroxy-3-cyclohexene-1-carboxylate synthase, found in Listeria welshimeri serovar 6b (strain ATCC 35897 / DSM 20650 / CCUG 15529 / CIP 8149 / NCTC 11857 / SLCC 5334 / V8).